We begin with the raw amino-acid sequence, 229 residues long: Enolase-phosphatase E1 (229 aa).

2 residues coordinate Mg(2+): aspartate 7 and glutamate 9. Residues 122–123 (SS) and lysine 161 each bind substrate. Residue aspartate 186 participates in Mg(2+) binding.

It belongs to the HAD-like hydrolase superfamily. MasA/MtnC family. As to quaternary structure, monomer. Requires Mg(2+) as cofactor.

Its subcellular location is the cytoplasm. It localises to the nucleus. The enzyme catalyses 5-methylsulfanyl-2,3-dioxopentyl phosphate + H2O = 1,2-dihydroxy-5-(methylsulfanyl)pent-1-en-3-one + phosphate. It functions in the pathway amino-acid biosynthesis; L-methionine biosynthesis via salvage pathway; L-methionine from S-methyl-5-thio-alpha-D-ribose 1-phosphate: step 3/6. It participates in amino-acid biosynthesis; L-methionine biosynthesis via salvage pathway; L-methionine from S-methyl-5-thio-alpha-D-ribose 1-phosphate: step 4/6. Its function is as follows. Bifunctional enzyme that catalyzes the enolization of 2,3-diketo-5-methylthiopentyl-1-phosphate (DK-MTP-1-P) into the intermediate 2-hydroxy-3-keto-5-methylthiopentenyl-1-phosphate (HK-MTPenyl-1-P), which is then dephosphorylated to form the acireductone 1,2-dihydroxy-3-keto-5-methylthiopentene (DHK-MTPene). The chain is Enolase-phosphatase E1 from Clavispora lusitaniae (strain ATCC 42720) (Yeast).